The following is a 150-amino-acid chain: Phosphopantetheine adenylyltransferase (150 aa).

Thr9 is a binding site for substrate. Residues 9–10 and His17 each bind ATP; that span reads TF. Positions 41, 73, and 87 each coordinate substrate. Residues 88–90, Glu98, and 122–128 contribute to the ATP site; these read GIR and LTCVSST.

The protein belongs to the bacterial CoaD family. In terms of assembly, homohexamer. Mg(2+) serves as cofactor.

It localises to the cytoplasm. The enzyme catalyses (R)-4'-phosphopantetheine + ATP + H(+) = 3'-dephospho-CoA + diphosphate. It participates in cofactor biosynthesis; coenzyme A biosynthesis; CoA from (R)-pantothenate: step 4/5. Reversibly transfers an adenylyl group from ATP to 4'-phosphopantetheine, yielding dephospho-CoA (dPCoA) and pyrophosphate. The protein is Phosphopantetheine adenylyltransferase of Bacteroides fragilis (strain ATCC 25285 / DSM 2151 / CCUG 4856 / JCM 11019 / LMG 10263 / NCTC 9343 / Onslow / VPI 2553 / EN-2).